We begin with the raw amino-acid sequence, 1025 residues long: MKLLKPSWVSHNGKPIFSVDIHPDGTKFATGGQGEDSGKVMIWNMAPVLKEEDEKNENVPKMLCQMDNHLACVNCVRWSNNGLYLASGGDDKLVMVWKRAALIGPSTVFGSSNKLANVEQWRCVTILRNHTGDVMDVSWSPHDVWLASCSVDNTIVIWNARKFPEMVTCLRGHTGLVKGLTWDPVGKYIASQADDHSLRVWRTVDWQMEANITKPFSECGGTTHVLRLSWSPDGQYLVSAHAMNNSGPTAQIVERDGWRTNMDFVGHRKAVTVVKFNPKIFKKKQKNGGSPKPSCPYCCCAVGSKDRSLSVWLTSLKRPLVVIHDLFDKSIMDISWTLTGLGMLVCSMDGTVAYLDFSLDELGDPLSEEEKNSIHQNIYGKSLAITNTEPQLSTTIIENPEMLKYQQERRNSTQANSGPGATGSESATPKLNSVMNGESLEDIRKNLLKKQVETRTPDGRRRITPLCIAQLDTGDFSPALFNSAPILPSGSSMSNQLTSQLSSDSSPGQAPPLGLRPSQDPMLISPPPSSAAKVLEDNKDGVKSCLLLTSASKIEPMKALDSRFTERSKATPGATAAIASSTGLTPSERPKESTPMQKDVKSKEDTSSDSEDKMATINKNLAFNKRKPELLMDGAEVVEKRKKGRPRKDKMAASIAQPLTQTTSPAEREPSRAAAAGAGAAAPTAAAALKLPTPSIKKAFTLQVSMDPSVVLEVENEVSVVAGSRLSQLRCSRDGRDWNTLLPSSVLTAAGSSDVVAVASQDRMLSVFSSCGRRLLPAIQLATPASALHCSAHFVMVLTSGATLSVWDVHKQKALVKNESLLTILSGAAVTVSQSMLTQQGVPVVGLSNGKSYCFSLSLETWTLIADTADSLVQCADFRNCLPNQDAPMSSGPLAAMQGRNFNAGRLASRLSSTPHHLQQSMTLAFLENQLASALTLQSAQEYRYWLLIYARFLVNEGSEYRLRELCKELLGPVHKSATTSWEPTTLGLRKRDLLREVLPVVGENLRFQRLFTEYQDQLELLRNK.

7 WD repeats span residues 11 to 53, 68 to 107, 129 to 168, 172 to 211, 220 to 263, 266 to 322, and 326 to 367; these read HNGK…KEED, NHLACVNCVRWSNNGLYLASGGDDKLVMVWKRAALIGPST, NHTGDVMDVSWSPHDVWLASCSVDNTIVIWNARKFPEMVT, GHTGLVKGLTWDPVGKYIASQADDHSLRVWRTVDWQMEAN, GGTT…TNMD, GHRK…PLVV, and LFDK…DPLS. Disordered regions lie at residues 408 to 433, 490 to 534, 563 to 614, and 634 to 678; these read ERRNSTQANSGPGATGSESATPKLNS, GSSM…AAKV, RFTE…EDKM, and GAEV…AAGA. Composition is skewed to polar residues over residues 412–433 and 490–508; these read STQANSGPGATGSESATPKLNS and GSSMSNQLTSQLSSDSSPG. Residues 588 to 614 show a composition bias toward basic and acidic residues; the sequence is ERPKESTPMQKDVKSKEDTSSDSEDKM.

The protein belongs to the WD repeat HIR1 family.

The protein localises to the nucleus. In terms of biological role, required for replication-independent chromatin assembly and for the periodic repression of histone gene transcription during the cell cycle. This chain is Protein HIRA (hira), found in Takifugu rubripes (Japanese pufferfish).